We begin with the raw amino-acid sequence, 194 residues long: Holliday junction branch migration complex subunit RuvA (194 aa).

The interval 1–64 is domain I; the sequence is MISRLTGKLV…EDAHLLFGFA (64 aa). The domain II stretch occupies residues 65–143; it reads TAEERKTFRQ…AHTVTDGLFA (79 aa). A flexible linker region spans residues 144-147; it reads ASPA. A domain III region spans residues 147-194; that stretch reads AADETEDIVSTLLALGYNEREAKAAVKGVPKGTDVGEGVRLALKNLLK.

It belongs to the RuvA family. In terms of assembly, homotetramer. Forms an RuvA(8)-RuvB(12)-Holliday junction (HJ) complex. HJ DNA is sandwiched between 2 RuvA tetramers; dsDNA enters through RuvA and exits via RuvB. An RuvB hexamer assembles on each DNA strand where it exits the tetramer. Each RuvB hexamer is contacted by two RuvA subunits (via domain III) on 2 adjacent RuvB subunits; this complex drives branch migration. In the full resolvosome a probable DNA-RuvA(4)-RuvB(12)-RuvC(2) complex forms which resolves the HJ.

Its subcellular location is the cytoplasm. The RuvA-RuvB-RuvC complex processes Holliday junction (HJ) DNA during genetic recombination and DNA repair, while the RuvA-RuvB complex plays an important role in the rescue of blocked DNA replication forks via replication fork reversal (RFR). RuvA specifically binds to HJ cruciform DNA, conferring on it an open structure. The RuvB hexamer acts as an ATP-dependent pump, pulling dsDNA into and through the RuvAB complex. HJ branch migration allows RuvC to scan DNA until it finds its consensus sequence, where it cleaves and resolves the cruciform DNA. The chain is Holliday junction branch migration complex subunit RuvA from Neisseria gonorrhoeae (strain ATCC 700825 / FA 1090).